The chain runs to 33 residues: Photosystem II reaction center protein Psb30 (33 aa).

Residues 5 to 25 form a helical membrane-spanning segment; sequence VVVQLGSLSLIVLAGPIIVLL.

Belongs to the Psb30/Ycf12 family. PSII is composed of 1 copy each of membrane proteins PsbA, PsbB, PsbC, PsbD, PsbE, PsbF, PsbH, PsbI, PsbJ, PsbK, PsbL, PsbM, PsbT, PsbX, PsbY, PsbZ, Psb30/Ycf12, peripheral proteins of the oxygen-evolving complex and a large number of cofactors. It forms dimeric complexes.

Its subcellular location is the plastid. It localises to the chloroplast thylakoid membrane. Functionally, a core subunit of photosystem II (PSII), probably helps stabilize the reaction center. The sequence is that of Photosystem II reaction center protein Psb30 from Mesostigma viride (Green alga).